The sequence spans 116 residues: Large ribosomal subunit protein bL19 (116 aa).

It belongs to the bacterial ribosomal protein bL19 family.

This protein is located at the 30S-50S ribosomal subunit interface and may play a role in the structure and function of the aminoacyl-tRNA binding site. In Staphylococcus carnosus (strain TM300), this protein is Large ribosomal subunit protein bL19.